Reading from the N-terminus, the 501-residue chain is Large ribosomal subunit protein uL2m (501 aa).

2 disordered regions span residues 187–217 and 459–501; these read GRER…APRR and AMNP…KRRN. Positions 198-213 are enriched in polar residues; the sequence is NTFSQSEGQRWKTQSG. Basic and acidic residues predominate over residues 464 to 474; sequence DHPHGGGEGRT.

Belongs to the universal ribosomal protein uL2 family.

It is found in the mitochondrion. The sequence is that of Large ribosomal subunit protein uL2m (RPL2) from Marchantia polymorpha (Common liverwort).